Here is a 279-residue protein sequence, read N- to C-terminus: Thymidylate synthase (279 aa).

Residue 133 to 134 (RR) coordinates dUMP. The active-site Nucleophile is the cysteine 154. Residues 178–181 (RSND), asparagine 189, and 219–221 (HIY) each bind dUMP. Aspartate 181 is a binding site for (6R)-5,10-methylene-5,6,7,8-tetrahydrofolate. (6R)-5,10-methylene-5,6,7,8-tetrahydrofolate is bound at residue alanine 278.

It belongs to the thymidylate synthase family. Bacterial-type ThyA subfamily. In terms of assembly, homodimer.

The protein resides in the cytoplasm. The enzyme catalyses dUMP + (6R)-5,10-methylene-5,6,7,8-tetrahydrofolate = 7,8-dihydrofolate + dTMP. The protein operates within pyrimidine metabolism; dTTP biosynthesis. Functionally, catalyzes the reductive methylation of 2'-deoxyuridine-5'-monophosphate (dUMP) to 2'-deoxythymidine-5'-monophosphate (dTMP) while utilizing 5,10-methylenetetrahydrofolate (mTHF) as the methyl donor and reductant in the reaction, yielding dihydrofolate (DHF) as a by-product. This enzymatic reaction provides an intracellular de novo source of dTMP, an essential precursor for DNA biosynthesis. In Streptococcus pneumoniae (strain 70585), this protein is Thymidylate synthase.